A 423-amino-acid polypeptide reads, in one-letter code: Tegument protein UL43 (423 aa).

The span at 1–12 (MEKTPAETTAVS) shows a compositional bias: polar residues. The disordered stretch occupies residues 1 to 46 (MEKTPAETTAVSAGNVPRDSIPCITNVSADTRGRTRPSRPATVPQR).

It belongs to the herpesviridae US22 family.

The protein localises to the virion tegument. The polypeptide is Tegument protein UL43 (UL43) (Homo sapiens (Human)).